The following is a 164-amino-acid chain: HTH-type transcriptional regulator IscR (164 aa).

An HTH rrf2-type domain is found at 2-131; sequence RLTSKGRYAV…NNITLAELVN (130 aa). A DNA-binding region (H-T-H motif) is located at residues 28-51; that stretch reads LADISERQGISLSYLEQLFSRLRK. [2Fe-2S] cluster-binding residues include cysteine 92, cysteine 98, and cysteine 104. A disordered region spans residues 143–164; that stretch reads NNDTRRTANGRPQETINVNLRA. Polar residues predominate over residues 152–164; that stretch reads GRPQETINVNLRA.

[2Fe-2S] cluster serves as cofactor.

Its function is as follows. Regulates the transcription of several operons and genes involved in the biogenesis of Fe-S clusters and Fe-S-containing proteins. This chain is HTH-type transcriptional regulator IscR, found in Yersinia enterocolitica serotype O:8 / biotype 1B (strain NCTC 13174 / 8081).